The chain runs to 57 residues: Thiocillin GE37468 (57 aa).

The propeptide at 1–42 (MGNNEEYFIDVNDLSIDVFDVVEQGGAVTALTADHGMPEVGA) is removed in mature form. Positions 43–44 (ST) form a cross-link, 5-methyloxazole-4-carboxylic acid (Ser-Thr). Positions 43–52 (STNCFCYICC) form a cross-link, pyridine-2,5-dicarboxylic acid (Ser-Cys) (with S-53). A cross-link (pyridine-2,5-dicarboxylic acid (Ser-Ser) (with C-52)) is located at residues 43–53 (STNCFCYICCS). The segment at residues 45–46 (NC) is a cross-link (thiazole-4-carboxylic acid (Asn-Cys)). Residues 47–48 (FC) constitute a cross-link (thiazoline-4-carboxylic acid (Phe-Cys)). I50 is modified (5-hydroxy-3-methylproline (Ile)). The thiazole-4-carboxylic acid (Ile-Cys) cross-link spans 50-51 (IC). The segment at residues 51–52 (CC) is a cross-link (thiazole-4-carboxylic acid (Cys-Cys)). A cross-link (thiazole-4-carboxylic acid (Ser-Cys)) is located at residues 53–54 (SC). 2 positions are modified to 2,3-didehydroalanine (Ser): S55 and S56. A propeptide (removed in mature form) is located at residue N57.

In terms of processing, maturation of thiazole and oxazole containing antibiotics involves the enzymatic condensation of a Cys, Ser or Thr with the alpha-carbonyl of the preceding amino acid to form a thioether or ether bond, then dehydration to form a double bond with the alpha-amino nitrogen. Thiazoline or oxazoline ring are dehydrogenated to form thiazole or oxazole rings. Post-translationally, maturation of pyridinyl containing antibiotics involves the cross-linking of a Ser and a Cys-Ser pair usually separated by 7 or 8 residues along the peptide chain. The Ser residues are dehydrated to didehydroalanines, then bonded between their beta carbons. The alpha carbonyl of the Cys condenses with alpha carbon of the first Ser to form a pyridinyl ring. The ring may be multiply dehydrogenated to form a pyridine ring with loss of the amino nitrogen of the first Ser.

Its subcellular location is the secreted. Its function is as follows. Has bacteriocidal activity against both aerobic and anaerobic Gram-positive bacteria. Inhibits growth of B.subtilis (MIC=0.047 ug/ml) and methicillin-resistant S.aureus (MRSA) (MIC=0.047 ug/ml). Has poor activity against Gram-negative bacteria, with the exception of B.fragilis. Inhibits bacterial protein biosynthesis by acting on elongation factor Tu (EF-Tu). Full antibiotic activity depends on the presence of the modified residue Ile-50. This chain is Thiocillin GE37468 (getA), found in Streptomyces sp.